Consider the following 327-residue polypeptide: Malate dehydrogenase (327 aa).

11–17 serves as a coordination point for NAD(+); that stretch reads GAAGQIS. Arginine 92 and arginine 98 together coordinate substrate. Residues asparagine 105, glutamine 112, and 129–131 each bind NAD(+); that span reads VGN. Residues asparagine 131 and arginine 162 each contribute to the substrate site. The Proton acceptor role is filled by histidine 187.

This sequence belongs to the LDH/MDH superfamily. MDH type 2 family.

It catalyses the reaction (S)-malate + NAD(+) = oxaloacetate + NADH + H(+). Its function is as follows. Catalyzes the reversible oxidation of malate to oxaloacetate. This is Malate dehydrogenase from Saccharophagus degradans (strain 2-40 / ATCC 43961 / DSM 17024).